The chain runs to 969 residues: Squamosa promoter-binding-like protein 6 (969 aa).

Disordered stretches follow at residues 1–25 (MEAA…DMDR) and 54–81 (EASG…VNAR). Over residues 55–74 (ASGLALNSSPSSSEEAGAAS) the composition is skewed to low complexity. An SBP-type zinc finger spans residues 149–226 (GPACQVEGCT…AGHNRRRRKT (78 aa)). Zn(2+) is bound by residues Cys-152, Cys-157, Cys-174, His-177, Cys-193, Cys-196, His-200, and Cys-212. The short motif at 209–225 (KRSCRRRLAGHNRRRRK) is the Bipartite nuclear localization signal element. Residues 377 to 434 (GMEGFEDGYEGSPTPAFKTTDSPNCPSWMHQDSTQSPPQTSGNSDSTSAQSLSSSNGD) form a disordered region. The span at 393–419 (FKTTDSPNCPSWMHQDSTQSPPQTSGN) shows a compositional bias: polar residues. Over residues 420–431 (SDSTSAQSLSSS) the composition is skewed to low complexity.

As to expression, ubiquitous.

It localises to the nucleus. Functionally, trans-acting factor that binds specifically to the consensus nucleotide sequence 5'-TNCGTACAA-3'. This chain is Squamosa promoter-binding-like protein 6 (SPL6), found in Oryza sativa subsp. japonica (Rice).